The chain runs to 455 residues: Dihydrolipoyllysine-residue succinyltransferase component of 2-oxoglutarate dehydrogenase complex, mitochondrial (455 aa).

Residues 1–68 (MLSRSRCASR…RFFRTTAVCK (68 aa)) constitute a mitochondrion transit peptide. A Lipoyl-binding domain is found at 71–145 (VITVKTPAFA…EGGTPLFTLR (75 aa)). Ser82 bears the Phosphoserine mark. Position 111 is an N6-lipoyllysine (Lys111). Lys155 bears the N6-acetyllysine mark. Low complexity predominate over residues 155–173 (KPAAAPAAAAPKAEPTVSA). The disordered stretch occupies residues 155–220 (KPAAAPAAAA…PRAEAGAGVG (66 aa)). The span at 174–193 (VPPPPAAPIPTQMPPVPSPS) shows a compositional bias: pro residues. 5 positions are modified to N6-acetyllysine: Lys269, Lys274, Lys275, Lys279, and Lys309. Active-site residues include His426 and Asp430.

Belongs to the 2-oxoacid dehydrogenase family. The 2-oxoglutarate dehydrogenase complex is composed of OGDH (2-oxoglutarate dehydrogenase; E1), DLST (dihydrolipoamide succinyltransferase; E2), DLD (dihydrolipoamide dehydrogenase; E3) and the assembly factor KGD4. It contains multiple copies of the three enzymatic components (E1, E2 and E3). In the nucleus, the 2-oxoglutarate dehydrogenase complex associates with KAT2A. Interacts with ABHD11; this interaction maintains the functional lipoylation of the 2-oxoglutarate dehydrogenase complex. The cofactor is (R)-lipoate.

The protein localises to the mitochondrion matrix. Its subcellular location is the nucleus. The enzyme catalyses N(6)-[(R)-dihydrolipoyl]-L-lysyl-[protein] + succinyl-CoA = N(6)-[(R)-S(8)-succinyldihydrolipoyl]-L-lysyl-[protein] + CoA. The protein operates within amino-acid degradation; L-lysine degradation via saccharopine pathway; glutaryl-CoA from L-lysine: step 6/6. It functions in the pathway carbohydrate metabolism; tricarboxylic acid cycle. Dihydrolipoamide succinyltransferase (E2) component of the 2-oxoglutarate dehydrogenase complex. The 2-oxoglutarate dehydrogenase complex catalyzes the overall conversion of 2-oxoglutarate to succinyl-CoA and CO(2). The 2-oxoglutarate dehydrogenase complex is mainly active in the mitochondrion. A fraction of the 2-oxoglutarate dehydrogenase complex also localizes in the nucleus and is required for lysine succinylation of histones: associates with KAT2A on chromatin and provides succinyl-CoA to histone succinyltransferase KAT2A. This chain is Dihydrolipoyllysine-residue succinyltransferase component of 2-oxoglutarate dehydrogenase complex, mitochondrial, found in Bos taurus (Bovine).